Consider the following 402-residue polypeptide: Digeranylgeranylglycerophospholipid reductase (402 aa).

Residues glycine 15, glutamate 34, cysteine 45, alanine 46, glycine 48, arginine 99, alanine 123, aspartate 280, glycine 292, and isoleucine 293 each contribute to the FAD site.

This sequence belongs to the geranylgeranyl reductase family. DGGGPL reductase subfamily. Requires FAD as cofactor.

It catalyses the reaction a 2,3-bis-O-phytanyl-sn-glycerol 1-phospholipid + 8 oxidized 2[4Fe-4S]-[ferredoxin] = a 2,3-bis-O-(geranylgeranyl)-sn-glycerol 1-phospholipid + 8 reduced 2[4Fe-4S]-[ferredoxin] + 16 H(+). The enzyme catalyses 2,3-bis-O-(phytanyl)-sn-glycerol 1-phosphate + 8 oxidized 2[4Fe-4S]-[ferredoxin] = 2,3-bis-O-(geranylgeranyl)-sn-glycerol 1-phosphate + 8 reduced 2[4Fe-4S]-[ferredoxin] + 16 H(+). It carries out the reaction a 2,3-bis-O-phytanyl-sn-glycerol 1-phospholipid + 8 A = a 2,3-bis-O-(geranylgeranyl)-sn-glycerol 1-phospholipid + 8 AH2. The catalysed reaction is CDP-2,3-bis-O-(geranylgeranyl)-sn-glycerol + 8 AH2 = CDP-2,3-bis-O-(phytanyl)-sn-glycerol + 8 A. It catalyses the reaction archaetidylserine + 8 AH2 = 2,3-bis-O-phytanyl-sn-glycero-3-phospho-L-serine + 8 A. Its pathway is membrane lipid metabolism; glycerophospholipid metabolism. Functionally, is involved in the reduction of 2,3-digeranylgeranylglycerophospholipids (unsaturated archaeols) into 2,3-diphytanylglycerophospholipids (saturated archaeols) in the biosynthesis of archaeal membrane lipids. Catalyzes the formation of archaetidic acid (2,3-di-O-phytanyl-sn-glyceryl phosphate) from 2,3-di-O-geranylgeranylglyceryl phosphate (DGGGP) via the hydrogenation of each double bond of the isoprenoid chains. Is also probably able to reduce double bonds of geranyl groups in CDP-2,3-bis-O-(geranylgeranyl)-sn-glycerol and archaetidylserine, thus acting at various stages in the biosynthesis of archaeal membrane lipids. The chain is Digeranylgeranylglycerophospholipid reductase from Methanospirillum hungatei JF-1 (strain ATCC 27890 / DSM 864 / NBRC 100397 / JF-1).